Here is a 368-residue protein sequence, read N- to C-terminus: Phospho-N-acetylmuramoyl-pentapeptide-transferase (368 aa).

A run of 10 helical transmembrane segments spans residues 2–22 (IALI…TPLL), 51–71 (TLGG…SALY), 80–100 (PTWA…LGFI), 116–136 (VGGK…LALI), 166–186 (IVAI…WTNA), 193–213 (LDGL…IIAM), 234–254 (PLDL…FLWY), 256–276 (CNPA…GLFA), 277–297 (ALSI…LFVV), and 340–360 (FWIV…GNWV).

The protein belongs to the glycosyltransferase 4 family. MraY subfamily. Mg(2+) serves as cofactor.

The protein resides in the cell membrane. The enzyme catalyses UDP-N-acetyl-alpha-D-muramoyl-L-alanyl-gamma-D-glutamyl-meso-2,6-diaminopimeloyl-D-alanyl-D-alanine + di-trans,octa-cis-undecaprenyl phosphate = di-trans,octa-cis-undecaprenyl diphospho-N-acetyl-alpha-D-muramoyl-L-alanyl-D-glutamyl-meso-2,6-diaminopimeloyl-D-alanyl-D-alanine + UMP. Its pathway is cell wall biogenesis; peptidoglycan biosynthesis. Functionally, catalyzes the initial step of the lipid cycle reactions in the biosynthesis of the cell wall peptidoglycan: transfers peptidoglycan precursor phospho-MurNAc-pentapeptide from UDP-MurNAc-pentapeptide onto the lipid carrier undecaprenyl phosphate, yielding undecaprenyl-pyrophosphoryl-MurNAc-pentapeptide, known as lipid I. The sequence is that of Phospho-N-acetylmuramoyl-pentapeptide-transferase from Bifidobacterium animalis subsp. lactis (strain AD011).